Consider the following 295-residue polypeptide: Cytidine deaminase (295 aa).

2 CMP/dCMP-type deaminase domains span residues 48-168 and 187-295; these read ADDE…FGPA and EETT…YLAI. A substrate-binding site is contributed by 89–91; it reads NLE. A Zn(2+)-binding site is contributed by histidine 102. Glutamate 104 (proton donor) is an active-site residue. 2 residues coordinate Zn(2+): cysteine 129 and cysteine 132.

It belongs to the cytidine and deoxycytidylate deaminase family. Homodimer. Zn(2+) is required as a cofactor.

The catalysed reaction is cytidine + H2O + H(+) = uridine + NH4(+). The enzyme catalyses 2'-deoxycytidine + H2O + H(+) = 2'-deoxyuridine + NH4(+). Its function is as follows. This enzyme scavenges exogenous and endogenous cytidine and 2'-deoxycytidine for UMP synthesis. The sequence is that of Cytidine deaminase from Vibrio atlanticus (strain LGP32) (Vibrio splendidus (strain Mel32)).